A 312-amino-acid polypeptide reads, in one-letter code: Malate dehydrogenase (312 aa).

Residues 12–17 and Asp36 contribute to the NAD(+) site; that span reads GAGFTG. Substrate contacts are provided by Arg87 and Arg93. Residues Asn100 and 123–125 contribute to the NAD(+) site; that span reads LTN. Asn125 serves as a coordination point for substrate. Position 149 is a phosphoserine (Ser149). Substrate is bound at residue Arg156. Catalysis depends on His180, which acts as the Proton acceptor.

It belongs to the LDH/MDH superfamily. MDH type 3 family.

It catalyses the reaction (S)-malate + NAD(+) = oxaloacetate + NADH + H(+). In terms of biological role, catalyzes the reversible oxidation of malate to oxaloacetate. The sequence is that of Malate dehydrogenase from Bacillus cytotoxicus (strain DSM 22905 / CIP 110041 / 391-98 / NVH 391-98).